We begin with the raw amino-acid sequence, 98 residues long: Large ribosomal subunit protein uL23 (98 aa).

This sequence belongs to the universal ribosomal protein uL23 family. In terms of assembly, part of the 50S ribosomal subunit. Contacts protein L29, and trigger factor when it is bound to the ribosome.

Functionally, one of the early assembly proteins it binds 23S rRNA. One of the proteins that surrounds the polypeptide exit tunnel on the outside of the ribosome. Forms the main docking site for trigger factor binding to the ribosome. The polypeptide is Large ribosomal subunit protein uL23 (Rickettsia bellii (strain OSU 85-389)).